Consider the following 124-residue polypeptide: Alpha-amylase inhibitor 0.53 (124 aa).

4 cysteine pairs are disulfide-bonded: cysteine 20/cysteine 41, cysteine 28/cysteine 83, cysteine 42/cysteine 99, and cysteine 54/cysteine 115.

This sequence belongs to the protease inhibitor I6 (cereal trypsin/alpha-amylase inhibitor) family. In terms of assembly, homodimer. In terms of processing, the disulfide bonds are essential for the inhibitor activity. In terms of tissue distribution, endosperm.

It localises to the secreted. Alpha-amylase inhibitor. The chain is Alpha-amylase inhibitor 0.53 from Triticum aestivum (Wheat).